An 84-amino-acid chain; its full sequence is Sulfur carrier protein TusA (84 aa).

C21 acts as the Cysteine persulfide intermediate in catalysis.

It belongs to the sulfur carrier protein TusA family.

It localises to the cytoplasm. Its function is as follows. Sulfur carrier protein which probably makes part of a sulfur-relay system. The sequence is that of Sulfur carrier protein TusA from Pseudomonas syringae pv. tomato (strain ATCC BAA-871 / DC3000).